We begin with the raw amino-acid sequence, 440 residues long: MSGNQQTNSQLFEKLKSHSFFYNPRDNERILSLILGEKQVEENKKIEILKAYKRGIDSQYFSANLPYYNEIKFISKITGFKVKDDLVIAKFQNGFTGDFDPHEIADNPDDFYNLISSYMFVKIKKGSENWFIDEIFSIEPPNNFEIAKEILEEADKEHLTYAVLLQAFGYDSQKMDSDDIFLTLPRLFPLFKSPITKRQINTIEISNRGTGKTTTFMILQEVFNFRYYTEPPTYANLIYDARNNMYGSVFLSNGLIFDEIQTWKDGYAVKELNSINSTLSTGIENCIWTRGAGTESKSATIQKCIPIIYAGNPFSLTLDKYQTPDIESYLQQYEIFTPAILDRIHIIQLAIKKTYDKIINARVLYPSILRALVELIQEKINRTTNYADCGNLESRRKEQSIDIQIVLQALDIDLQIGKVSNEEVCNKIVNLMRFSNLGGW.

This is an uncharacterized protein from Saccharolobus islandicus (Sulfolobus islandicus).